Consider the following 463-residue polypeptide: MVSHTHKRRKRASATQLYQTCKAAGTCPSDVINKVEHTTIADQILKWASMGVYFGGLGIGTGSGTGGRTGYVPLTTGRTGIVPKVTAEPGVVSRPPIVVESVAPTDPSIVSLIEESSIIQSGAPITNIPSHGGFEVTSSGSEVPAILDVSPSTSVHITTSTHLNPAFTDPTIVQPTPPVEAGGRIIISHSTVTADSAEQIPMDTFVIHSDPTTSTPIPGTAPRPRLGLYSKALQQVEIVDPTFLSSPQRLITYDNPVFEDPNATLTFEQPTVHEAPDSRFMDIVTLHRPALTSRRGIVRFSRVGARGTMYTRSGIRIGGRVHFFTDISSIPTEESIELQPLGRSQSFPTVSDTSDLYDIYADENLLNNDISFTDTHVSLQNSTKVVNTAVPLATVPDIYAQTGPDISFPTIPIHIPYIPVSPSISPQSVSIHGTDFYLHPSLWHLGKRRKRFSYFFTDNYVAA.

The short motif at 1–12 (MVSHTHKRRKRA) is the Nuclear localization signal element. The cysteines at positions 21 and 27 are disulfide-linked. Positions 444-452 (HLGKRRKRF) match the Nuclear localization signal motif.

This sequence belongs to the papillomaviridae L2 protein family. In terms of assembly, interacts with major capsid protein L1. Interacts with E2; this interaction inhibits E2 transcriptional activity but not the DNA replication function E2. Interacts with host GADD45GIP1. Interacts with host HSPA8; this interaction is required for L2 nuclear translocation. Interacts with host importins KPNB2 and KPNB3. Forms a complex with importin alpha2-beta1 heterodimers via interaction with the importin alpha2 adapter. Interacts with host DYNLT1; this interaction is essential for virus intracellular transport during entry. Interacts (via C-terminus) with host retromer subunits VPS35 and VPS29. In terms of processing, highly phosphorylated.

The protein localises to the virion. Its subcellular location is the host nucleus. The protein resides in the host early endosome. It is found in the host Golgi apparatus. Minor protein of the capsid that localizes along the inner surface of the virion, within the central cavities beneath the L1 pentamers. Plays a role in capsid stabilization through interaction with the major capsid protein L1. Once the virion enters the host cell, L2 escorts the genomic DNA into the nucleus by promoting escape from the endosomal compartments and traffic through the host Golgi network. Mechanistically, the C-terminus of L2 possesses a cell-penetrating peptide that protudes from the host endosome, interacts with host cytoplasmic retromer cargo and thereby mediates the capsid delivery to the host trans-Golgi network. Plays a role through its interaction with host dynein in the intracellular microtubule-dependent transport of viral capsid toward the nucleus. Mediates the viral genome import into the nucleus through binding to host importins. Once within the nucleus, L2 localizes viral genomes to host PML bodies in order to activate early gene expression for establishment of infection. Later on, promotes late gene expression by interacting with the viral E2 protein and by inhibiting its transcriptional activation functions. During virion assembly, encapsidates the genome by direct interaction with the viral DNA. The sequence is that of Minor capsid protein L2 from Homo sapiens (Human).